A 401-amino-acid chain; its full sequence is MKPLLIFLIAGEPSGDVLGGRLMAALREAMEGHVEFAGVGGPRMAEQGLQSLFPMEDLALFGLAELLPRLPTLLKRLDQTTKAVLERTPDAVVSIDAPDFCFRVEQRLRRAGARMPLIHYVAPTVWAWRPGRARKVAKFLDHLLALLPFEPPYFEAVGLPCTFVGHPVVESGADAGDGERFRRRHGIAPDATVLTVLPGSRRSEVTKLLPDFGATLEILASRYPDLQVVVPTVPGVAETVAEAVQSWPVPAITLLGDADKYDAFAASTAALAASGTVALELALARVPAVIAYRIHPVSHALYRRFIRVRYVNLVNIMLDRPLVPELLQQDCTPDRLALAVDRLLNEPSARQEQIDGVTEVARWLGQGDVPPSRRAAEAVLNVITKRVIADRQGQTPGRSRS.

Belongs to the LpxB family.

It catalyses the reaction a lipid X + a UDP-2-N,3-O-bis[(3R)-3-hydroxyacyl]-alpha-D-glucosamine = a lipid A disaccharide + UDP + H(+). It functions in the pathway bacterial outer membrane biogenesis; LPS lipid A biosynthesis. Its function is as follows. Condensation of UDP-2,3-diacylglucosamine and 2,3-diacylglucosamine-1-phosphate to form lipid A disaccharide, a precursor of lipid A, a phosphorylated glycolipid that anchors the lipopolysaccharide to the outer membrane of the cell. In Rhodospirillum centenum (strain ATCC 51521 / SW), this protein is Lipid-A-disaccharide synthase.